Consider the following 296-residue polypeptide: MGPTASGKTALAIDMATQYNCEIISVDSALIYRDMNIGSAKPSAEELEMAPHKLIDILDPSESYSAADFRRDALLAIEDIISRGKTPLLVGGTMMYFKALLEGLSPLPSADEAIRQQILAQAQTEGWEALHQELCNIDPVAGERIHPNDPQRLSRALEVYRISGKTMTELTQTKSAALPYDVVQFAIAPNDRKVLHELIAKRFNIMLEQGFIEEVARLKARDDLHLELPSMRCVGYRQCWQYLDNEFDHATMVEKATAATRQLAKRQLTWLRSWPDLQWLESGVEGNLVTLMRQSR.

2 to 9 contributes to the ATP binding site; the sequence is GPTASGKT. 4–9 serves as a coordination point for substrate; that stretch reads TASGKT. Interaction with substrate tRNA regions lie at residues 27 to 30, 151 to 155, and 232 to 237; these read DSAL, QRLSR, and RCVGYR.

The protein belongs to the IPP transferase family. Monomer. Requires Mg(2+) as cofactor.

It carries out the reaction adenosine(37) in tRNA + dimethylallyl diphosphate = N(6)-dimethylallyladenosine(37) in tRNA + diphosphate. In terms of biological role, catalyzes the transfer of a dimethylallyl group onto the adenine at position 37 in tRNAs that read codons beginning with uridine, leading to the formation of N6-(dimethylallyl)adenosine (i(6)A). This is tRNA dimethylallyltransferase from Shewanella frigidimarina (strain NCIMB 400).